Reading from the N-terminus, the 251-residue chain is Diphthine synthase (251 aa).

S-adenosyl-L-methionine is bound by residues D83, L86, 111–112 (SI), L163, and L205.

This sequence belongs to the diphthine synthase family. Homodimer.

It carries out the reaction 2-[(3S)-amino-3-carboxypropyl]-L-histidyl-[translation elongation factor 2] + 3 S-adenosyl-L-methionine = diphthine-[translation elongation factor 2] + 3 S-adenosyl-L-homocysteine + 3 H(+). Its pathway is protein modification; peptidyl-diphthamide biosynthesis. Its function is as follows. S-adenosyl-L-methionine-dependent methyltransferase that catalyzes the trimethylation of the amino group of the modified target histidine residue in translation elongation factor 2 (EF-2), to form an intermediate called diphthine. The three successive methylation reactions represent the second step of diphthamide biosynthesis. This is Diphthine synthase from Pyrobaculum calidifontis (strain DSM 21063 / JCM 11548 / VA1).